The chain runs to 367 residues: Queuine tRNA-ribosyltransferase (367 aa).

Asp91 serves as the catalytic Proton acceptor. Residues 91 to 95 (DSGGF), Asp145, Gln188, and Gly215 contribute to the substrate site. Asp265 functions as the Nucleophile in the catalytic mechanism. Positions 270 to 274 (TRVAR) are RNA binding; important for wobble base 34 recognition. Residues Cys303, Cys305, Cys308, and His334 each coordinate Zn(2+).

The protein belongs to the queuine tRNA-ribosyltransferase family. In terms of assembly, homodimer. Within each dimer, one monomer is responsible for RNA recognition and catalysis, while the other monomer binds to the replacement base PreQ1. Requires Zn(2+) as cofactor.

It catalyses the reaction 7-aminomethyl-7-carbaguanine + guanosine(34) in tRNA = 7-aminomethyl-7-carbaguanosine(34) in tRNA + guanine. It functions in the pathway tRNA modification; tRNA-queuosine biosynthesis. Its function is as follows. Catalyzes the base-exchange of a guanine (G) residue with the queuine precursor 7-aminomethyl-7-deazaguanine (PreQ1) at position 34 (anticodon wobble position) in tRNAs with GU(N) anticodons (tRNA-Asp, -Asn, -His and -Tyr). Catalysis occurs through a double-displacement mechanism. The nucleophile active site attacks the C1' of nucleotide 34 to detach the guanine base from the RNA, forming a covalent enzyme-RNA intermediate. The proton acceptor active site deprotonates the incoming PreQ1, allowing a nucleophilic attack on the C1' of the ribose to form the product. After dissociation, two additional enzymatic reactions on the tRNA convert PreQ1 to queuine (Q), resulting in the hypermodified nucleoside queuosine (7-(((4,5-cis-dihydroxy-2-cyclopenten-1-yl)amino)methyl)-7-deazaguanosine). This Thermosipho africanus (strain TCF52B) protein is Queuine tRNA-ribosyltransferase.